Consider the following 245-residue polypeptide: 2,3-bisphosphoglycerate-dependent phosphoglycerate mutase (245 aa).

Residues 8-15, 21-22, Arg60, 87-90, Lys98, 114-115, and 183-184 contribute to the substrate site; these read RHGQSLWN, TG, ERHY, RR, and GN. Residue His9 is the Tele-phosphohistidine intermediate of the active site. Glu87 acts as the Proton donor/acceptor in catalysis.

This sequence belongs to the phosphoglycerate mutase family. BPG-dependent PGAM subfamily.

It catalyses the reaction (2R)-2-phosphoglycerate = (2R)-3-phosphoglycerate. Its pathway is carbohydrate degradation; glycolysis; pyruvate from D-glyceraldehyde 3-phosphate: step 3/5. Catalyzes the interconversion of 2-phosphoglycerate and 3-phosphoglycerate. The protein is 2,3-bisphosphoglycerate-dependent phosphoglycerate mutase of Bacillus cereus (strain G9842).